The chain runs to 194 residues: Peptidyl-tRNA hydrolase (194 aa).

Tyr16 contacts tRNA. Catalysis depends on His21, which acts as the Proton acceptor. Phe67, Asn69, and Asn115 together coordinate tRNA.

This sequence belongs to the PTH family. In terms of assembly, monomer.

Its subcellular location is the cytoplasm. The enzyme catalyses an N-acyl-L-alpha-aminoacyl-tRNA + H2O = an N-acyl-L-amino acid + a tRNA + H(+). In terms of biological role, hydrolyzes ribosome-free peptidyl-tRNAs (with 1 or more amino acids incorporated), which drop off the ribosome during protein synthesis, or as a result of ribosome stalling. Its function is as follows. Catalyzes the release of premature peptidyl moieties from peptidyl-tRNA molecules trapped in stalled 50S ribosomal subunits, and thus maintains levels of free tRNAs and 50S ribosomes. This chain is Peptidyl-tRNA hydrolase, found in Colwellia psychrerythraea (strain 34H / ATCC BAA-681) (Vibrio psychroerythus).